The sequence spans 286 residues: Bifunctional protein FolD 2 (286 aa).

NADP(+) contacts are provided by residues 165–167 (GRG), Thr192, and Ile233.

Belongs to the tetrahydrofolate dehydrogenase/cyclohydrolase family. Homodimer.

It catalyses the reaction (6R)-5,10-methylene-5,6,7,8-tetrahydrofolate + NADP(+) = (6R)-5,10-methenyltetrahydrofolate + NADPH. It carries out the reaction (6R)-5,10-methenyltetrahydrofolate + H2O = (6R)-10-formyltetrahydrofolate + H(+). Its pathway is one-carbon metabolism; tetrahydrofolate interconversion. In terms of biological role, catalyzes the oxidation of 5,10-methylenetetrahydrofolate to 5,10-methenyltetrahydrofolate and then the hydrolysis of 5,10-methenyltetrahydrofolate to 10-formyltetrahydrofolate. This is Bifunctional protein FolD 2 from Salinispora arenicola (strain CNS-205).